A 151-amino-acid chain; its full sequence is Ubiquitin-like protein 4A-B (151 aa).

Positions 1–76 constitute a Ubiquitin-like domain; it reads MILTIKPLKG…LNLVVRPAGE (76 aa).

In terms of assembly, component of the BAT3 complex.

Its subcellular location is the cytoplasm. The protein resides in the cytosol. In terms of biological role, component of the BAT3 complex, a multiprotein complex involved in the post-translational delivery of tail-anchored (TA) membrane proteins to the endoplasmic reticulum membrane. TA membrane proteins, also named type II transmembrane proteins, contain a single C-terminal transmembrane region. This chain is Ubiquitin-like protein 4A-B (ubl4ab), found in Oncorhynchus mykiss (Rainbow trout).